Here is a 136-residue protein sequence, read N- to C-terminus: Small ribosomal subunit protein uS19 (136 aa).

This sequence belongs to the universal ribosomal protein uS19 family.

Protein S19 forms a complex with S13 that binds strongly to the 16S ribosomal RNA. This is Small ribosomal subunit protein uS19 (rps19) from Methanothermobacter thermautotrophicus (strain ATCC 29096 / DSM 1053 / JCM 10044 / NBRC 100330 / Delta H) (Methanobacterium thermoautotrophicum).